The chain runs to 276 residues: Proteasome subunit beta type-8 (276 aa).

Positions 1-72 (MALLEVCGAP…KNIRKEMVHG (72 aa)) are cleaved as a propeptide — removed in mature form. Thr73 (nucleophile) is an active-site residue.

Belongs to the peptidase T1B family. The 26S proteasome consists of a 20S proteasome core and two 19S regulatory subunits. The 20S proteasome core is composed of 28 subunits that are arranged in four stacked rings, resulting in a barrel-shaped structure. The two end rings are each formed by seven alpha subunits, and the two central rings are each formed by seven beta subunits. The catalytic chamber with the active sites is on the inside of the barrel. Component of the immunoproteasome, where it displaces the equivalent housekeeping subunit PSMB5. Component of the spermatoproteasome, a form of the proteasome specifically found in testis. Directly interacts with POMP. Autocleaved. The resulting N-terminal Thr residue of the mature subunit is responsible for the nucleophile proteolytic activity.

The protein localises to the cytoplasm. Its subcellular location is the nucleus. The catalysed reaction is Cleavage of peptide bonds with very broad specificity.. Functionally, the proteasome is a multicatalytic proteinase complex which is characterized by its ability to cleave peptides with Arg, Phe, Tyr, Leu, and Glu adjacent to the leaving group at neutral or slightly basic pH. The proteasome has an ATP-dependent proteolytic activity. This subunit is involved in antigen processing to generate class I binding peptides. May participate in the generation of spliced peptides resulting from the ligation of two separate proteasomal cleavage products that are not contiguous in the parental protein. Required for adipocyte differentiation. This Canis lupus familiaris (Dog) protein is Proteasome subunit beta type-8 (PSMB8).